A 65-amino-acid polypeptide reads, in one-letter code: Large ribosomal subunit protein uL29 (65 aa).

The protein belongs to the universal ribosomal protein uL29 family.

The sequence is that of Large ribosomal subunit protein uL29 from Brevibacillus brevis (strain 47 / JCM 6285 / NBRC 100599).